The chain runs to 417 residues: UPF0761 membrane protein Daci_4966 (417 aa).

The next 6 helical transmembrane spans lie at 49 to 69 (VLAL…FPIF), 106 to 126 (QLGM…ILTI), 146 to 166 (VLIY…SLVL), 187 to 207 (FIFD…LYHY), 235 to 255 (ALGL…TFAT), and 256 to 276 (LPIL…GAVV).

The protein belongs to the UPF0761 family.

It is found in the cell inner membrane. This is UPF0761 membrane protein Daci_4966 from Delftia acidovorans (strain DSM 14801 / SPH-1).